The chain runs to 89 residues: Putative regulatory protein CLL_A1210 (89 aa).

Belongs to the RemA family.

The chain is Putative regulatory protein CLL_A1210 from Clostridium botulinum (strain Eklund 17B / Type B).